A 92-amino-acid polypeptide reads, in one-letter code: Small ribosomal subunit protein uS19c (92 aa).

Belongs to the universal ribosomal protein uS19 family.

The protein localises to the plastid. Its subcellular location is the chloroplast. Its function is as follows. Protein S19 forms a complex with S13 that binds strongly to the 16S ribosomal RNA. In Chara vulgaris (Common stonewort), this protein is Small ribosomal subunit protein uS19c.